We begin with the raw amino-acid sequence, 107 residues long: uncharacterized protein (107 aa).

Residues 88–107 form a disordered region; the sequence is GSTPWGSGRQVNAARPIGGR.

It is found in the virion. This is an uncharacterized protein from Acanthamoeba polyphaga (Amoeba).